Consider the following 1241-residue polypeptide: Interphotoreceptor matrix proteoglycan 2 (1241 aa).

Residues 1–28 (MIMFLPLGRISLGILILFLTGGNLVSVS) form the signal peptide. At 29–1104 (EEIQDRMHAV…CEEFVSEPFV (1076 aa)) the chain is on the extracellular side. O-linked (GalNAc...) threonine glycosylation occurs at T193. Residues 206 to 234 (AASERSAASPQESISNEIENVTEQPTPPA) form a disordered region. Over residues 211–229 (SAASPQESISNEIENVTEQ) the composition is skewed to polar residues. Residue N225 is glycosylated (N-linked (GlcNAc...) asparagine). An O-linked (GalNAc...) threonine glycan is attached at T231. Residues 235–349 (AEQIAEFSIQ…KPTAVYTISN (115 aa)) enclose the SEA 1 domain. The hyaluronan-binding motif involved in chondroitin sulfate A-binding stretch occupies residues 255 to 263 (RDPSSALYR). N-linked (GlcNAc...) asparagine glycosylation is found at N297, N316, and N366. O-linked (GalNAc...) threonine glycans are attached at residues T429, T430, and T431. Residues 431–443 (TISPFGFSSGPPS) show a composition bias toward low complexity. 2 disordered regions span residues 431–456 (TISP…STLG) and 500–520 (VAPE…TEES). A glycan (O-linked (GalNAc...) threonine) is linked at T817. N-linked (GlcNAc...) asparagine glycosylation is found at N841, N945, and N959. The region spanning 900–1013 (GALVVFFSLR…YSLDVESGDD (114 aa)) is the SEA 2 domain. EGF-like domains lie at 1013–1054 (DANP…LPCQ) and 1055–1096 (SVCD…QHCE). 6 cysteine pairs are disulfide-bonded: C1017–C1028, C1022–C1039, C1041–C1053, C1057–C1070, C1064–C1080, and C1082–C1095. The segment at 1083–1091 (RVGSNWWYR) is hyaluronan-binding motif involved in chondroitin sulfate C-binding. The chain crosses the membrane as a helical span at residues 1105–1125 (IGITIASVVSLLLVASAVVFF). At 1126-1241 (LAKMLQAQNV…FVREHEMEEL (116 aa)) the chain is on the cytoplasmic side. The segment at 1128–1136 (KMLQAQNVR) is hyaluronan-binding motif involved in chondroitin sulfate A- and C-binding. The segment at 1139-1145 (RQRPTNR) is hyaluronan-binding motif involved in chondroitin sulfate C-binding. Positions 1210-1218 (KEEIQERMR) are hyaluronan-binding motif involved in chondroitin sulfate A- and C-binding motif.

As to expression, expressed in the pineal gland and the outer layer of the retina.

The protein localises to the photoreceptor outer segment membrane. Its subcellular location is the photoreceptor inner segment membrane. It localises to the secreted. It is found in the extracellular space. The protein resides in the extracellular matrix. The protein localises to the interphotoreceptor matrix. In terms of biological role, chondroitin sulfate- and hyaluronan-binding proteoglycan involved in the organization of interphotoreceptor matrix; may participate in the maturation and maintenance of the light-sensitive photoreceptor outer segment. Binds heparin. The protein is Interphotoreceptor matrix proteoglycan 2 (Impg2) of Rattus norvegicus (Rat).